Here is a 466-residue protein sequence, read N- to C-terminus: Soluble pyridine nucleotide transhydrogenase (466 aa).

E36–C45 contributes to the FAD binding site.

It belongs to the class-I pyridine nucleotide-disulfide oxidoreductase family. The cofactor is FAD.

Its subcellular location is the cytoplasm. It carries out the reaction NAD(+) + NADPH = NADH + NADP(+). Conversion of NADPH, generated by peripheral catabolic pathways, to NADH, which can enter the respiratory chain for energy generation. The polypeptide is Soluble pyridine nucleotide transhydrogenase (Yersinia enterocolitica serotype O:8 / biotype 1B (strain NCTC 13174 / 8081)).